Consider the following 397-residue polypeptide: L-aspartate--L-methionine ligase (397 aa).

One can recognise an ATP-grasp domain in the interval 131 to 347 (VALNNKARIP…FFNTILKYVK (217 aa)). Lysine 136, valine 171, lysine 173, glycine 183, valine 186, isoleucine 188, glutamate 215, glutamine 216, isoleucine 218, asparagine 223, and threonine 246 together coordinate ADP. Aspartate 288 serves as a coordination point for Mg(2+). 2 residues coordinate ADP: leucine 290 and isoleucine 300. A Mg(2+)-binding site is contributed by aspartate 301. Arginine 305 serves as the catalytic Critical for catalysis.

Primarily a monomer in solution. Minor homodimer formation. It depends on Mg(2+) as a cofactor.

It carries out the reaction L-aspartate + L-methionine + ATP = L-aspartyl-L-methionine + ADP + phosphate + H(+). Its pathway is amino-acid metabolism. L-amino acid ligase, which preferentially catalyzes the formation of L-aspartyl-L-methionine dipeptide from L-aspartate and L-methionine in the presence of ATP. Less active with L-asparagine and L-methionine as substrates. Less active with L-aspartate and either L-phenylalanine, L-valine, L-leucine or L-isoleucine as substrates. Decreased activity when L-methionine is substituted with seleno-DL-methionine, L-homocysteine, L-methionine sulfoxide, L-methionine sulfoximine and o-acetyl-L-serine. Decreased activity with acetylation of L-methionine amino group. Decreased activity by modification of L-methionine carboxylate to L-methionine methyl ester. No activity when L-methionine is substituted with L-homoserine. No activity with formylation of L-methionine amino group. No activity by modification of L-methionine carboxylate to L-methionine-glycine carboxylate. No activity when L-aspartate substrate is replaced by analogs such as L-homoserine, DL-aspartate beta-methyl ester, L-glutamate or o-acetyl-L-serine. No activity when L-aspartate amino and alpha-carboxylate groups are modified to L-malate, glycine-L-aspartate, L-aspartate-glycine or N-carbamoyl-DL-aspartate. No activity with L-methionine or L-aspartate as sole substrates. No activity in presence of other nucleoside triphosphates including GTP, CTP, UTP, TTP or ITP. Involved in sulfur amino acid metabolism. This Staphylococcus aureus (strain NCTC 8325 / PS 47) protein is L-aspartate--L-methionine ligase.